We begin with the raw amino-acid sequence, 374 residues long: Speckle-type POZ protein B (374 aa).

Residues 31–161 (KFSYMWTINN…DDKLTLFCEV (131 aa)) form the MATH domain. The required for nuclear localization stretch occupies residues 71–191 (VNPKGLDEES…PECRLSDELG (121 aa)). In terms of domain architecture, BTB spans 173–297 (QNTMNMVKVP…MCEEALCSNL (125 aa)). Positions 297–355 (LSVENAAEILILADLHSADQLKTQAVDFINYHASDVMETSGWKSMVVSHPHLVAEAYRS) are homodimerization.

It belongs to the Tdpoz family. Homodimer. Part of cullin-RING-based BCR (BTB-CUL3-RBX1) E3 ubiquitin-protein ligase complexes that contain CUL3 and SPOP, plus a target protein.

Its subcellular location is the nucleus. It localises to the nucleus speckle. Its pathway is protein modification; protein ubiquitination. Its function is as follows. Component of a cullin-RING-based BCR (BTB-CUL3-RBX1) E3 ubiquitin-protein ligase complex that mediates the ubiquitination of target proteins, leading most often to their proteasomal degradation. In Xenopus laevis (African clawed frog), this protein is Speckle-type POZ protein B (spop-b).